A 741-amino-acid chain; its full sequence is Ribosome-releasing factor 2, mitochondrial (741 aa).

Residues 1–29 constitute a mitochondrion transit peptide; sequence MLRYVYFNGFGMRQGLLKRCSSHILRRSY. The region spanning 31–310 is the tr-type G domain; the sequence is SDIRNIGILA…AVNHYLPAPE (280 aa). Residues 40 to 47, 104 to 108, and 158 to 161 contribute to the GTP site; these read AHIDAGKT, DTPGH, and NKMD. A disordered region spans residues 408 to 436; the sequence is SLKNAEKRFKQQRHSDGMSEEEDDDEDHH. Residues 411–424 are compositionally biased toward basic and acidic residues; sequence NAEKRFKQQRHSDG.

The protein belongs to the TRAFAC class translation factor GTPase superfamily. Classic translation factor GTPase family. EF-G/EF-2 subfamily.

The protein localises to the mitochondrion. Functionally, mitochondrial GTPase that mediates the disassembly of ribosomes from messenger RNA at the termination of mitochondrial protein biosynthesis. Not involved in the GTP-dependent ribosomal translocation step during translation elongation. This is Ribosome-releasing factor 2, mitochondrial (EF-G2) from Drosophila willistoni (Fruit fly).